The sequence spans 139 residues: Short neuropeptide F (139 aa).

Residues 1-23 (MGRARRTVRAPAQHDALGGHALA) constitute a propeptide that is removed on maturation. The tract at residues 1–48 (MGRARRTVRAPAQHDALGGHALARKSVRSPSRRLRFGRRSDPDMPPQA) is disordered. Over residues 22 to 37 (LARKSVRSPSRRLRFG) the composition is skewed to basic residues. Phenylalanine amide is present on phenylalanine 36. The propeptide occupies 40 to 62 (SDPDMPPQAPLDEMNELLSLREV). Phenylalanine 70 is modified (phenylalanine amide). The propeptide occupies 74–96 (SEERAVPHIFPQEFLTQEQDRAV). Residue phenylalanine 105 is modified to Phenylalanine amide. Positions 109–139 (SDNNMFLLPYESALPQEVKANGSVEDDRQQE) are excised as a propeptide.

This sequence belongs to the NPY family. As to expression, sNPF peptide 1: Expressed in corpora cardiaca (CC), corpora allata (CA), antennal lobe (AL) and gnathal ganglion (GNG) (at protein level). Expression in AL detected in all animals, in GNG in most animals, expression in CC and CA in some animals (at protein level). sNPF peptide 2: Expressed in corpora cardiaca (CC), corpora allata (CA), antennal lobe (AL) and gnathal ganglion (GNG) (at protein level). Expression in AL detected in all animals, in GNG, CC and CA in most animals (at protein level). sNPF peptide 3: Expressed in corpora cardiaca (CC), corpora allata (CA), antennal lobe (AL) and gnathal ganglion (GNG) (at protein level). Expression detected in all animals (at protein level).

The protein localises to the secreted. Functionally, plays a role in controlling food intake and regulating body size. The sequence is that of Short neuropeptide F from Agrotis ipsilon (Black cutworm moth).